Consider the following 180-residue polypeptide: 4-hydroxy-3-methylbut-2-enyl diphosphate reductase (180 aa).

[4Fe-4S] cluster is bound at residue Cys-12. Positions 41 and 74 each coordinate (2E)-4-hydroxy-3-methylbut-2-enyl diphosphate. Positions 41 and 74 each coordinate dimethylallyl diphosphate. His-41 and His-74 together coordinate isopentenyl diphosphate. Position 96 (Cys-96) interacts with [4Fe-4S] cluster. (2E)-4-hydroxy-3-methylbut-2-enyl diphosphate is bound at residue His-124. His-124 lines the dimethylallyl diphosphate pocket. Position 124 (His-124) interacts with isopentenyl diphosphate. Glu-126 serves as the catalytic Proton donor. Thr-168 lines the (2E)-4-hydroxy-3-methylbut-2-enyl diphosphate pocket.

Belongs to the IspH family. Requires [4Fe-4S] cluster as cofactor.

The catalysed reaction is isopentenyl diphosphate + 2 oxidized [2Fe-2S]-[ferredoxin] + H2O = (2E)-4-hydroxy-3-methylbut-2-enyl diphosphate + 2 reduced [2Fe-2S]-[ferredoxin] + 2 H(+). It carries out the reaction dimethylallyl diphosphate + 2 oxidized [2Fe-2S]-[ferredoxin] + H2O = (2E)-4-hydroxy-3-methylbut-2-enyl diphosphate + 2 reduced [2Fe-2S]-[ferredoxin] + 2 H(+). It functions in the pathway isoprenoid biosynthesis; dimethylallyl diphosphate biosynthesis; dimethylallyl diphosphate from (2E)-4-hydroxy-3-methylbutenyl diphosphate: step 1/1. The protein operates within isoprenoid biosynthesis; isopentenyl diphosphate biosynthesis via DXP pathway; isopentenyl diphosphate from 1-deoxy-D-xylulose 5-phosphate: step 6/6. Functionally, catalyzes the conversion of 1-hydroxy-2-methyl-2-(E)-butenyl 4-diphosphate (HMBPP) into a mixture of isopentenyl diphosphate (IPP) and dimethylallyl diphosphate (DMAPP). Acts in the terminal step of the DOXP/MEP pathway for isoprenoid precursor biosynthesis. This Pseudomonas fluorescens protein is 4-hydroxy-3-methylbut-2-enyl diphosphate reductase.